A 565-amino-acid chain; its full sequence is Heme/hemopexin transporter protein HuxB (565 aa).

An N-terminal signal peptide occupies residues 1 to 26 (MKMRPRYSVIASAVSLGFVLSKSVMA). Residues 73–150 (FPLTQVQILD…GTVKILLLKG (78 aa)) enclose the POTRA domain.

The protein belongs to the TPS (TC 1.B.20) family.

It localises to the cell outer membrane. Functionally, likely functions in the release of soluble HxuA from the cell. Its function is as follows. Probable member of a two partner secretion pathway (TPS) in which it mediates the secretion of HuxA. The protein is Heme/hemopexin transporter protein HuxB (hxuB) of Haemophilus influenzae (strain 86-028NP).